Consider the following 167-residue polypeptide: 3-isopropylmalate dehydratase small subunit (167 aa).

It belongs to the LeuD family. LeuD type 2 subfamily. In terms of assembly, heterodimer of LeuC and LeuD.

It carries out the reaction (2R,3S)-3-isopropylmalate = (2S)-2-isopropylmalate. The protein operates within amino-acid biosynthesis; L-leucine biosynthesis; L-leucine from 3-methyl-2-oxobutanoate: step 2/4. Its function is as follows. Catalyzes the isomerization between 2-isopropylmalate and 3-isopropylmalate, via the formation of 2-isopropylmaleate. The polypeptide is 3-isopropylmalate dehydratase small subunit (Wolinella succinogenes (strain ATCC 29543 / DSM 1740 / CCUG 13145 / JCM 31913 / LMG 7466 / NCTC 11488 / FDC 602W) (Vibrio succinogenes)).